Consider the following 93-residue polypeptide: MSRSLKKGPYVEGRLLARVEKMNAANEKRVLKTWSRSSTIFPQMVGHTIAVHEGRKHIPIYITEDMVGHKLGEFAPTRTYKGHAGSEKSSGLR.

Belongs to the universal ribosomal protein uS19 family.

Protein S19 forms a complex with S13 that binds strongly to the 16S ribosomal RNA. The protein is Small ribosomal subunit protein uS19 of Desulfitobacterium hafniense (strain Y51).